A 195-amino-acid polypeptide reads, in one-letter code: Shikimate kinase (195 aa).

ATP is bound at residue 21-26 (GTGKTS). T25 contacts Mg(2+). Substrate is bound by residues D43, R67, and G89. The disordered stretch occupies residues 128 to 148 (REQRPSFSGKASTEISEETMR). Residue R131 coordinates ATP. Over residues 132 to 141 (PSFSGKASTE) the composition is skewed to polar residues. Position 158 (R158) interacts with substrate.

It belongs to the shikimate kinase family. As to quaternary structure, monomer. It depends on Mg(2+) as a cofactor.

It localises to the cytoplasm. It catalyses the reaction shikimate + ATP = 3-phosphoshikimate + ADP + H(+). The protein operates within metabolic intermediate biosynthesis; chorismate biosynthesis; chorismate from D-erythrose 4-phosphate and phosphoenolpyruvate: step 5/7. Functionally, catalyzes the specific phosphorylation of the 3-hydroxyl group of shikimic acid using ATP as a cosubstrate. The sequence is that of Shikimate kinase from Syntrophus aciditrophicus (strain SB).